The following is a 146-amino-acid chain: MKLHELKAAEGANKASKRVGRGTGSGLGKTSGRGQNGQNSRSGGGVRPGFEGGQMPLYRRLPKRGFKNIFAKEYAAINLDRLNCFEDGTVVTPELLVEKRVVKKVKDGVKILGNGNIEKKLTVKAAKFSKSAIEKIEAAGGKVEVI.

Residues 1–56 (MKLHELKAAEGANKASKRVGRGTGSGLGKTSGRGQNGQNSRSGGGVRPGFEGGQMP) form a disordered region. Composition is skewed to gly residues over residues 21-35 (RGTG…GRGQ) and 42-52 (SGGGVRPGFEG).

The protein belongs to the universal ribosomal protein uL15 family. In terms of assembly, part of the 50S ribosomal subunit.

Its function is as follows. Binds to the 23S rRNA. The protein is Large ribosomal subunit protein uL15 of Clostridium botulinum (strain ATCC 19397 / Type A).